A 687-amino-acid chain; its full sequence is MTAVSPDYLVVLFTTTAGANGSKLGSDEKEVIQLLWKVINLANKKVGELHEVTVRPDHLELTEECKEITRIEADSLYVAPQLEQALQQFNQSVGNELNIGVGTSFCICTDGQLHIRQVLHPEASKKNILLPECFYSFFDLRKEFLKCCPGSSDTNELDVHAMASYLGFEKKSTRYRYGASEVDDMGDIIVTLISEPYNYKFSDPERVNYKFESGTCSKLEIIDDNTIIRARGLPWQSSDQDIARFFKGLNIAKGGAALCLNAQGRRNGEALVRFVSEEHRDLALQRHKHHMGNRYIEVYKATGEDFLKIAGGTSNEVAQFLSKENQVIVRMRGLPFTATAEEVLAFFGQQCPVTGGKEGILFVTYPDNRPTGDAFVLFACEEYAQNALKKHKELLGKRYIELFRSTAAEVQQVLNRYSSAPLIPLPTPPIIPVLPQPFIPPVNVRDCIRLRGLPYAATIEDILEFLGEFSADIRTHGVHMVLNHQGRPSGDSFIQMKSADRAYLAAQKCHKKTMKDRYVEVFQCSAEEMNFVLMGGTLNRNGLSPPPCKLPCLSPPSYTFPAQAAVIPTEAAALYQPSLLLNPRSLQPSAAYYPAGAQLFMNYTAYYPSPPGSPSSLGFFPASASVSSIPPHNTGAMVRMQGLAYNSGVKEILNFFQGYQYSPEDGLLPVNDQARALLTHPKEWVCI.

RRM domains lie at 226–303 (TIIR…KATG), 327–407 (VIVR…RSTA), and 446–526 (DCIR…QCSA).

Belongs to the ESRP family.

It is found in the nucleus. Its function is as follows. mRNA splicing factor that regulates the formation of epithelial cell-specific isoforms. Specifically regulates the expression of FGFR2-IIIb, an epithelial cell-specific isoform of fgfr2. Acts by directly binding specific sequences in mRNAs. Binds the GU-rich sequence motifs in the ISE/ISS-3, a cis-element regulatory region present in the mRNA of fgfr2. The protein is Epithelial splicing regulatory protein 1 (esrp1) of Xenopus tropicalis (Western clawed frog).